We begin with the raw amino-acid sequence, 292 residues long: 4-hydroxy-tetrahydrodipicolinate synthase (292 aa).

Thr-45 contributes to the pyruvate binding site. Tyr-133 functions as the Proton donor/acceptor in the catalytic mechanism. The active-site Schiff-base intermediate with substrate is the Lys-161. Ile-203 is a pyruvate binding site.

Belongs to the DapA family. In terms of assembly, homotetramer; dimer of dimers.

It localises to the cytoplasm. It carries out the reaction L-aspartate 4-semialdehyde + pyruvate = (2S,4S)-4-hydroxy-2,3,4,5-tetrahydrodipicolinate + H2O + H(+). The protein operates within amino-acid biosynthesis; L-lysine biosynthesis via DAP pathway; (S)-tetrahydrodipicolinate from L-aspartate: step 3/4. Its function is as follows. Catalyzes the condensation of (S)-aspartate-beta-semialdehyde [(S)-ASA] and pyruvate to 4-hydroxy-tetrahydrodipicolinate (HTPA). The polypeptide is 4-hydroxy-tetrahydrodipicolinate synthase (Shigella dysenteriae serotype 1 (strain Sd197)).